The chain runs to 131 residues: Small ribosomal subunit protein uS8 (131 aa).

This sequence belongs to the universal ribosomal protein uS8 family. Part of the 30S ribosomal subunit. Contacts proteins S5 and S12.

Its function is as follows. One of the primary rRNA binding proteins, it binds directly to 16S rRNA central domain where it helps coordinate assembly of the platform of the 30S subunit. The protein is Small ribosomal subunit protein uS8 of Hyphomonas neptunium (strain ATCC 15444).